The sequence spans 155 residues: Large ribosomal subunit protein eL24 (155 aa).

The span at 94–129 (RSLKPEVRKAQRDEKKKADKEKKKADKAARKSEKAK) shows a compositional bias: basic and acidic residues. A disordered region spans residues 94–155 (RSLKPEVRKA…AFQKVAATSR (62 aa)).

This sequence belongs to the eukaryotic ribosomal protein eL24 family.

In Kluyveromyces lactis (strain ATCC 8585 / CBS 2359 / DSM 70799 / NBRC 1267 / NRRL Y-1140 / WM37) (Yeast), this protein is Large ribosomal subunit protein eL24 (RPL24).